The following is a 106-amino-acid chain: Large ribosomal subunit protein P2A (106 aa).

Lys2 is covalently cross-linked (Glycyl lysine isopeptide (Lys-Gly) (interchain with G-Cter in ubiquitin)). At Thr16 the chain carries Phosphothreonine. Phosphoserine occurs at positions 40 and 43. Residue Lys48 forms a Glycyl lysine isopeptide (Lys-Gly) (interchain with G-Cter in ubiquitin) linkage. Ser49 is modified (phosphoserine). Residues 65 to 82 (PAAGPASAGGAAAASGDA) are compositionally biased toward low complexity. The interval 65–106 (PAAGPASAGGAAAASGDAAAEEEKEEEAAEESDDDMGFGLFD) is disordered. Residues 83–100 (AAEEEKEEEAAEESDDDM) show a composition bias toward acidic residues. Ser96 bears the Phosphoserine mark.

This sequence belongs to the eukaryotic ribosomal protein P1/P2 family. As to quaternary structure, component of the large ribosomal subunit (LSU). Mature yeast ribosomes consist of a small (40S) and a large (60S) subunit. The 40S small subunit contains 1 molecule of ribosomal RNA (18S rRNA) and 33 different proteins (encoded by 57 genes). The large 60S subunit contains 3 rRNA molecules (25S, 5.8S and 5S rRNA) and 46 different proteins (encoded by 81 genes). The 5 acidic ribosomal P-proteins form the stalk structure of the 60S subunit. They are organized as a pentameric complex in which uL10/P0 interacts with 2 heterodimers, P1A-P2B and P1B-P2A. Phosphorylation is not involved in the interaction of the acidic P proteins with the ribosome, however it is suggested to affect the ribosome activity and to participate in a possible ribosome regulatory mechanism. Post-translationally, the N-terminus is not modified.

The protein localises to the cytoplasm. Functionally, component of the ribosome, a large ribonucleoprotein complex responsible for the synthesis of proteins in the cell. The small ribosomal subunit (SSU) binds messenger RNAs (mRNAs) and translates the encoded message by selecting cognate aminoacyl-transfer RNA (tRNA) molecules. The large subunit (LSU) contains the ribosomal catalytic site termed the peptidyl transferase center (PTC), which catalyzes the formation of peptide bonds, thereby polymerizing the amino acids delivered by tRNAs into a polypeptide chain. The nascent polypeptides leave the ribosome through a tunnel in the LSU and interact with protein factors that function in enzymatic processing, targeting, and the membrane insertion of nascent chains at the exit of the ribosomal tunnel. This is Large ribosomal subunit protein P2A from Saccharomyces cerevisiae (strain ATCC 204508 / S288c) (Baker's yeast).